A 462-amino-acid chain; its full sequence is Nitrate/nitrite transporter NarU (462 aa).

Residues 1 to 35 (MALQNEKNSRYLLRDWKPENPAFWENKGKHIARRN) lie on the Cytoplasmic side of the membrane. Residues 36–56 (LWISVSCLLLAFCVWMLFSAV) form a helical membrane-spanning segment. Residues 57 to 76 (TVNLNKIGFNFTTDQLFLLT) lie on the Periplasmic side of the membrane. A helical membrane pass occupies residues 77 to 97 (ALPSVSGALLRVPYSFMVPIF). The Cytoplasmic portion of the chain corresponds to 98–101 (GGRR). The chain crosses the membrane as a helical span at residues 102–122 (WTVFSTAILIIPCVWLGIAVQ). Topologically, residues 123-125 (NPN) are periplasmic. Residues 126–146 (TPFGIFIVIALLCGFAGANFA) form a helical membrane-spanning segment. Residues 147 to 180 (SSMGNISFFFPKAKQGSALGINGGLGNLGVSVMQ) lie on the Cytoplasmic side of the membrane. A helical transmembrane segment spans residues 181 to 201 (LVAPLVIFVPVFAFLGVNGVP). Topologically, residues 202–206 (QADGS) are periplasmic. A helical transmembrane segment spans residues 207–227 (VMSLANAAWIWVPLLAIATIA). At 228–258 (AWSGMNDIASSRASIADQLPVLQRLHLWLLS) the chain is on the cytoplasmic side. Residues 259–279 (LLYLATFGSFIGFSAGFAMLA) traverse the membrane as a helical segment. At 280 to 287 (KTQFPDVN) the chain is on the periplasmic side. Residues 288-308 (ILRLAFFGPFIGAIARSVGGA) form a helical membrane-spanning segment. Topologically, residues 309–317 (ISDKFGGVR) are cytoplasmic. The chain crosses the membrane as a helical span at residues 318 to 338 (VTLINFIFMAIFSALLFLTLP). The Periplasmic segment spans residues 339 to 344 (GTGSGN). A helical membrane pass occupies residues 345–365 (FIAFYAVFMGLFLTAGLGSGS). At 366–401 (TFQMIAVIFRQITIYRVKMKGGSDEQAHKEAVTETA) the chain is on the cytoplasmic side. The helical transmembrane segment at 402-422 (AALGFISAIGAVGGFFIPQAF) threads the bilayer. The Periplasmic portion of the chain corresponds to 423 to 432 (GMSLNMTGSP). Residues 433 to 453 (VGAMKVFLIFYIVCVLLTWLV) traverse the membrane as a helical segment. Topologically, residues 454-462 (YGRRKFSQK) are cytoplasmic.

The protein belongs to the major facilitator superfamily. Nitrate/nitrite porter (TC 2.A.1.8) family.

The protein resides in the cell inner membrane. In terms of biological role, catalyzes nitrate uptake, nitrite uptake and nitrite export across the cytoplasmic membrane. May function as a nitrate/H(+) and nitrite/H(+) channel. Could confer a selective advantage during severe nutrient starvation or slow growth. This is Nitrate/nitrite transporter NarU (narU) from Escherichia coli (strain K12).